Reading from the N-terminus, the 125-residue chain is Large ribosomal subunit protein bL12 (125 aa).

The protein belongs to the bacterial ribosomal protein bL12 family. In terms of assembly, homodimer. Part of the ribosomal stalk of the 50S ribosomal subunit. Forms a multimeric L10(L12)X complex, where L10 forms an elongated spine to which 2 to 4 L12 dimers bind in a sequential fashion. Binds GTP-bound translation factors.

In terms of biological role, forms part of the ribosomal stalk which helps the ribosome interact with GTP-bound translation factors. Is thus essential for accurate translation. The chain is Large ribosomal subunit protein bL12 from Rickettsia canadensis (strain McKiel).